Reading from the N-terminus, the 369-residue chain is DNA replication and repair protein RecF (369 aa).

30–37 (GDNAQGKT) contributes to the ATP binding site.

The protein belongs to the RecF family.

It localises to the cytoplasm. Functionally, the RecF protein is involved in DNA metabolism; it is required for DNA replication and normal SOS inducibility. RecF binds preferentially to single-stranded, linear DNA. It also seems to bind ATP. In Streptococcus equi subsp. equi (strain 4047), this protein is DNA replication and repair protein RecF.